We begin with the raw amino-acid sequence, 170 residues long: Photosystem II extrinsic protein V (170 aa).

A signal peptide spans 1–34 (MNKILGIDPLKKFIFGISAFVLLFWQLNVGAANA). Heme c-binding residues include Cys-70, Cys-73, His-74, and His-125.

It belongs to the cytochrome c family. PsbV subfamily. As to quaternary structure, PSII is composed of 1 copy each of membrane proteins PsbA, PsbB, PsbC, PsbD, PsbE, PsbF, PsbH, PsbI, PsbJ, PsbK, PsbL, PsbM, PsbT, PsbX, PsbY, PsbZ, Psb30/Ycf12, peripheral proteins PsbO, CyanoQ (PsbQ), PsbU, PsbV and a large number of cofactors. It forms dimeric complexes. Heme c serves as cofactor.

The protein resides in the cellular thylakoid membrane. Its function is as follows. One of the extrinsic, lumenal subunits of photosystem II (PSII). PSII is a light-driven water plastoquinone oxidoreductase, using light energy to abstract electrons from H(2)O, generating a proton gradient subsequently used for ATP formation. The extrinsic proteins stabilize the structure of photosystem II oxygen-evolving complex (OEC), the ion environment of oxygen evolution and protect the OEC against heat-induced inactivation. Low-potential cytochrome c that plays a role in the OEC of PSII. This chain is Photosystem II extrinsic protein V, found in Picosynechococcus sp. (strain ATCC 27264 / PCC 7002 / PR-6) (Agmenellum quadruplicatum).